Here is a 550-residue protein sequence, read N- to C-terminus: Tyrosinase HcTyr2 (550 aa).

Cu cation-binding residues include His56, His84, His93, His282, His286, and His326.

The protein belongs to the tyrosinase family. The cofactor is Cu(2+).

It carries out the reaction L-tyrosine + O2 = L-dopaquinone + H2O. The catalysed reaction is 2 L-tyrosine + O2 = 2 L-dopa. It catalyses the reaction 2 L-dopa + O2 = 2 L-dopaquinone + 2 H2O. In terms of biological role, copper-containing oxidase that catalyzes the conversion of L-tyrosine to L-dopa and then to L-dopaquinone. Can use various phenols such as p-coumaric acid, phenol, pyrocatechol, syringol or pyrogallol. Accepts several of the constituents of lignin and potentially participates in lignin functionalization. The sequence is that of Tyrosinase HcTyr2 from Hahella sp. (strain CCB-MM4).